A 915-amino-acid chain; its full sequence is Transferrin-binding protein A (915 aa).

An N-terminal signal peptide occupies residues 1–24 (MQQQHLFRLNILCLSLMTALPAYA). A TonB box motif is present at residues 38-45 (DTIQVKAK). The region spanning 51–176 (RDNEVTGLGK…LAGSVAFQTK (126 aa)) is the TBDR plug domain. Positions 187–915 (QWGIQSKTAY…NYTFSLEMKF (729 aa)) constitute a TBDR beta-barrel domain. A compositionally biased stretch (polar residues) spans 526–540 (LKTPPQNNGKKTSPN). The disordered stretch occupies residues 526 to 545 (LKTPPQNNGKKTSPNGREKN). The TonB C-terminal box motif lies at 898 to 915 (NRYAAPGRNYTFSLEMKF).

It belongs to the TonB-dependent receptor family. Binds both human apo- and holo-transferrin (TF), via the TF C-terminus. Forms a large complex with TF and TbpB.

The protein localises to the cell outer membrane. Functionally, neisseria acquires iron by extracting it from serum transferrin (TF) in its human host. Acts as a TF receptor and is required for TF utilization. Binds both apo- and holo-TF, via the TF C-terminus. In Neisseria gonorrhoeae, this protein is Transferrin-binding protein A.